The primary structure comprises 124 residues: Small ribosomal subunit protein bS16 (124 aa).

Basic and acidic residues predominate over residues 84-110 (EKAERKNLKKGEPGKAAKERAEKRAAR). A disordered region spans residues 84-124 (EKAERKNLKKGEPGKAAKERAEKRAAREAAANAPAEEAASE). Over residues 111–124 (EAAANAPAEEAASE) the composition is skewed to low complexity.

It belongs to the bacterial ribosomal protein bS16 family.

The sequence is that of Small ribosomal subunit protein bS16 from Paracoccus denitrificans (strain Pd 1222).